Reading from the N-terminus, the 99-residue chain is Small ribosomal subunit protein uS14m (99 aa).

This sequence belongs to the universal ribosomal protein uS14 family.

The protein resides in the mitochondrion. The chain is Small ribosomal subunit protein uS14m (RPS14) from Acanthamoeba castellanii (Amoeba).